The following is a 513-amino-acid chain: Putative BTB/POZ domain-containing protein L55 (513 aa).

Residues 11–83 (SPIKIILQDI…FHGYKMEISD (73 aa)) enclose the BTB domain.

It belongs to the mimivirus BTB/WD family.

The sequence is that of Putative BTB/POZ domain-containing protein L55 from Acanthamoeba polyphaga (Amoeba).